A 1368-amino-acid chain; its full sequence is DNA-directed RNA polymerase subunit beta (1368 aa).

Belongs to the RNA polymerase beta chain family. In terms of assembly, the RNAP catalytic core consists of 2 alpha, 1 beta, 1 beta' and 1 omega subunit. When a sigma factor is associated with the core the holoenzyme is formed, which can initiate transcription.

It carries out the reaction RNA(n) + a ribonucleoside 5'-triphosphate = RNA(n+1) + diphosphate. Its function is as follows. DNA-dependent RNA polymerase catalyzes the transcription of DNA into RNA using the four ribonucleoside triphosphates as substrates. The polypeptide is DNA-directed RNA polymerase subunit beta (Burkholderia cenocepacia (strain ATCC BAA-245 / DSM 16553 / LMG 16656 / NCTC 13227 / J2315 / CF5610) (Burkholderia cepacia (strain J2315))).